Consider the following 278-residue polypeptide: MTREFELENNYQLCDEIGRGRFGTITRCFSPATKEFYACKTIDKRVLIDALDRECIETEPRIMAMLPPHPNIIRIFDLYETEDSLAIVMELVDPPMTIYDRLISAGGRLSESESASYAKQILSALAHCHRCDVVHRDVKPDNVLVDLVSGGVKLCDFGSAVWLGGETAEGVVGTPYYVAPEVVMGRKYDEKVDIWSAGVVIYTMLAGEPPFNGETAEDIFESILRGNLRFPPKKFGSVSSEAKDLLRKMICRDVSRRFSAEDALRHSWMMNVGNLQSN.

Residues 11–269 (YQLCDEIGRG…AEDALRHSWM (259 aa)) enclose the Protein kinase domain. Residues 17–25 (IGRGRFGTI) and Lys40 each bind ATP. Asp137 serves as the catalytic Proton acceptor.

It belongs to the protein kinase superfamily. Ser/Thr protein kinase family. Expressed in flowers and roots, and at lower levels in cauline leaves. Barely detectable in rosette leaves and stems.

It catalyses the reaction L-seryl-[protein] + ATP = O-phospho-L-seryl-[protein] + ADP + H(+). The catalysed reaction is L-threonyl-[protein] + ATP = O-phospho-L-threonyl-[protein] + ADP + H(+). Functionally, calcium-independent kinase involved in light-dependent phosphoenolpyruvate carboxylase phosphorylation. This is Phosphoenolpyruvate carboxylase kinase 2 (PPCK2) from Arabidopsis thaliana (Mouse-ear cress).